The chain runs to 190 residues: Hypoxanthine/guanine phosphoribosyltransferase (190 aa).

This sequence belongs to the purine/pyrimidine phosphoribosyltransferase family. Archaeal HPRT subfamily. Homodimer.

Its subcellular location is the cytoplasm. It carries out the reaction IMP + diphosphate = hypoxanthine + 5-phospho-alpha-D-ribose 1-diphosphate. The enzyme catalyses GMP + diphosphate = guanine + 5-phospho-alpha-D-ribose 1-diphosphate. Its pathway is purine metabolism; IMP biosynthesis via salvage pathway; IMP from hypoxanthine: step 1/1. Catalyzes a salvage reaction resulting in the formation of IMP that is energically less costly than de novo synthesis. This is Hypoxanthine/guanine phosphoribosyltransferase from Methanothrix thermoacetophila (strain DSM 6194 / JCM 14653 / NBRC 101360 / PT) (Methanosaeta thermophila).